The primary structure comprises 431 residues: Adenylosuccinate synthetase 2 (431 aa).

GTP contacts are provided by residues Gly13 to Lys19 and Gly41 to Thr43. Asp14 acts as the Proton acceptor in catalysis. Mg(2+)-binding residues include Asp14 and Gly41. Residues Asp14–Lys17, Asn39–His42, Thr130, Arg144, Gln225, Thr240, and Arg304 each bind IMP. The Proton donor role is filled by His42. Ser300–Arg306 contributes to the substrate binding site. Residues Arg306, Lys332–Asp334, and Ser414–Gly416 each bind GTP.

Belongs to the adenylosuccinate synthetase family. In terms of assembly, homodimer. It depends on Mg(2+) as a cofactor.

It is found in the cytoplasm. The enzyme catalyses IMP + L-aspartate + GTP = N(6)-(1,2-dicarboxyethyl)-AMP + GDP + phosphate + 2 H(+). It functions in the pathway purine metabolism; AMP biosynthesis via de novo pathway; AMP from IMP: step 1/2. In terms of biological role, plays an important role in the de novo pathway of purine nucleotide biosynthesis. Catalyzes the first committed step in the biosynthesis of AMP from IMP. The polypeptide is Adenylosuccinate synthetase 2 (Chromobacterium violaceum (strain ATCC 12472 / DSM 30191 / JCM 1249 / CCUG 213 / NBRC 12614 / NCIMB 9131 / NCTC 9757 / MK)).